Here is a 96-residue protein sequence, read N- to C-terminus: U-stichotoxin-Hau2b (96 aa).

The signal sequence occupies residues 1–18 (MKPIFIVALLFSTCLVNA). 2 propeptides span residues 19 to 29 (KPSIDDAEMKR) and 30 to 33 (EPKP). 2 disulfide bridges follow: Cys-40–Cys-51 and Cys-43–Cys-58. Propeptides lie at residues 62–64 (RKR) and 65–68 (EPKP). Disulfide bonds link Cys-75–Cys-86 and Cys-78–Cys-93.

The protein belongs to the sea anemone BBH family.

The protein resides in the secreted. Its subcellular location is the nematocyst. In terms of biological role, neurotoxin that paralyzes freshwater crabs at high concentration. This Heteractis aurora (Banded sea anemone) protein is U-stichotoxin-Hau2b.